Here is a 230-residue protein sequence, read N- to C-terminus: Demethylmenaquinone methyltransferase (230 aa).

S-adenosyl-L-methionine-binding positions include threonine 62, aspartate 80, 100-101 (DG), and serine 117.

The protein belongs to the class I-like SAM-binding methyltransferase superfamily. MenG/UbiE family.

The enzyme catalyses a 2-demethylmenaquinol + S-adenosyl-L-methionine = a menaquinol + S-adenosyl-L-homocysteine + H(+). It participates in quinol/quinone metabolism; menaquinone biosynthesis; menaquinol from 1,4-dihydroxy-2-naphthoate: step 2/2. Functionally, methyltransferase required for the conversion of demethylmenaquinol (DMKH2) to menaquinol (MKH2). The polypeptide is Demethylmenaquinone methyltransferase (Corynebacterium efficiens (strain DSM 44549 / YS-314 / AJ 12310 / JCM 11189 / NBRC 100395)).